Consider the following 118-residue polypeptide: Fluoride-specific ion channel FluC 2 (118 aa).

Helical transmembrane passes span 1–21 (MIEA…RFAI), 33–53 (FPLA…YIIG), 55–75 (GVTT…FTTF), and 91–111 (ISTF…FAFL). Na(+) contacts are provided by Gly-70 and Thr-73.

Belongs to the fluoride channel Fluc/FEX (TC 1.A.43) family.

The protein resides in the cell membrane. It carries out the reaction fluoride(in) = fluoride(out). With respect to regulation, na(+) is not transported, but it plays an essential structural role and its presence is essential for fluoride channel function. Functionally, fluoride-specific ion channel. Important for reducing fluoride concentration in the cell, thus reducing its toxicity. The chain is Fluoride-specific ion channel FluC 2 from Bacillus cereus (strain ATCC 14579 / DSM 31 / CCUG 7414 / JCM 2152 / NBRC 15305 / NCIMB 9373 / NCTC 2599 / NRRL B-3711).